Consider the following 221-residue polypeptide: MSDEWTPRTQLGKLVASGQIKTISEALKTKLPLKEYEIVDYLLPNIKDEVIDIKRAQRMTDSGRRMTYSITVVVGNEDGYIGLGIGRSKEAAPAIRKALINAKLNIMEIRRGCGSWECGCGRAHTLPFLVEGKSGSVRITLKPAPRGVGLAVGNVAKIILRMAGIEDAWGFAAGHTKTTVNYALAVYNALKETAKVRINPGIVLSTPIYSGSVINVSGHTD.

The region spanning 46-109 (IKDEVIDIKR…INAKLNIMEI (64 aa)) is the S5 DRBM domain.

It belongs to the universal ribosomal protein uS5 family. In terms of assembly, part of the 30S ribosomal subunit. Contacts protein S4.

Functionally, with S4 and S12 plays an important role in translational accuracy. The sequence is that of Small ribosomal subunit protein uS5 from Thermoplasma volcanium (strain ATCC 51530 / DSM 4299 / JCM 9571 / NBRC 15438 / GSS1).